We begin with the raw amino-acid sequence, 412 residues long: uncharacterized protein (412 aa).

Helical transmembrane passes span 17–37 (LLLA…ELVI), 54–74 (VLAL…PLLV), 91–111 (MIFI…FFFL), 112–132 (GRAL…AVVG), 146–166 (LIVS…SFIG), 173–193 (WTFW…LLEM), 225–245 (VYIT…SFLG), 257–277 (TAAG…VITG), 299–319 (LLAC…SLFI), 346–366 (VMVF…ALMG), and 375–395 (AAVG…SVFA).

Belongs to the major facilitator superfamily.

The protein resides in the cell membrane. This is an uncharacterized protein from Bacillus subtilis (strain 168).